The primary structure comprises 493 residues: Ketol-acid reductoisomerase (NADP(+)) (493 aa).

The region spanning 14 to 208 (LDQLGRCRFM…GGDRAGVLES (195 aa)) is the KARI N-terminal Rossmann domain. Residues 45 to 48 (CGAQ), Arg68, Arg76, Ser78, and 108 to 110 (DKQ) contribute to the NADP(+) site. The active site involves His132. Gly158 is a binding site for NADP(+). KARI C-terminal knotted domains follow at residues 209-345 (SFVA…APKA) and 346-486 (DGIK…MTDM). Mg(2+) contacts are provided by Asp217, Glu221, Glu390, and Glu394. Ser415 provides a ligand contact to substrate.

It belongs to the ketol-acid reductoisomerase family. The cofactor is Mg(2+).

It carries out the reaction (2R)-2,3-dihydroxy-3-methylbutanoate + NADP(+) = (2S)-2-acetolactate + NADPH + H(+). It catalyses the reaction (2R,3R)-2,3-dihydroxy-3-methylpentanoate + NADP(+) = (S)-2-ethyl-2-hydroxy-3-oxobutanoate + NADPH + H(+). It functions in the pathway amino-acid biosynthesis; L-isoleucine biosynthesis; L-isoleucine from 2-oxobutanoate: step 2/4. It participates in amino-acid biosynthesis; L-valine biosynthesis; L-valine from pyruvate: step 2/4. Involved in the biosynthesis of branched-chain amino acids (BCAA). Catalyzes an alkyl-migration followed by a ketol-acid reduction of (S)-2-acetolactate (S2AL) to yield (R)-2,3-dihydroxy-isovalerate. In the isomerase reaction, S2AL is rearranged via a Mg-dependent methyl migration to produce 3-hydroxy-3-methyl-2-ketobutyrate (HMKB). In the reductase reaction, this 2-ketoacid undergoes a metal-dependent reduction by NADPH to yield (R)-2,3-dihydroxy-isovalerate. This Mannheimia succiniciproducens (strain KCTC 0769BP / MBEL55E) protein is Ketol-acid reductoisomerase (NADP(+)).